Reading from the N-terminus, the 384-residue chain is DNA dC-&gt;dU-editing enzyme APOBEC-3G (384 aa).

The interval 1–60 (MNPQFRNMVDGMDPHKFSYNFKNRPILSRRNTVWLCYEVKTKGPSRPPLDAKIFRGQVYF) is essential for cytoplasmic localization. 2 CMP/dCMP-type deaminase domains span residues 29 to 138 (RRNT…LRSL) and 214 to 328 (GRHE…LRTL). Phosphothreonine; by PKA is present on T32. 3 residues coordinate Zn(2+): H65, C97, and C100. A necessary for homooligomerization region spans residues 209–336 (EPCVEGRHET…TLDEAEAKIS (128 aa)). The segment at 213-215 (EGR) is interaction with DNA. T218 carries the phosphothreonine; by PKA and CAMK2 modification. Residue H257 participates in Zn(2+) binding. The active-site Proton donor is E259. Zn(2+)-binding residues include C288 and C291. Residues 313–320 (RIYDDQGR) are interaction with DNA.

Belongs to the cytidine and deoxycytidylate deaminase family. Homodimer. Zn(2+) serves as cofactor.

It localises to the cytoplasm. The protein localises to the nucleus. Its subcellular location is the P-body. It catalyses the reaction a 2'-deoxycytidine in single-stranded DNA + H2O + H(+) = a 2'-deoxyuridine in single-stranded DNA + NH4(+). In terms of biological role, DNA deaminase (cytidine deaminase) which acts as an inhibitor of retrovirus replication and retrotransposon mobility. After the penetration of retroviral nucleocapsids into target cells of infection and the initiation of reverse transcription, it can induce the conversion of cytosine to uracil in the minus-sense single-strand viral DNA, leading to G-to-A hypermutations in the subsequent plus-strand viral DNA. The resultant detrimental levels of mutations in the proviral genome, along with a deamination-independent mechanism that works prior to the proviral integration, together exert efficient antiretroviral effects in infected target cells. Selectively targets single-stranded DNA and does not deaminate double-stranded DNA or single- or double-stranded RNA. This Pongo pygmaeus (Bornean orangutan) protein is DNA dC-&gt;dU-editing enzyme APOBEC-3G (APOBEC3G).